The sequence spans 96 residues: Integration host factor subunit beta (96 aa).

The protein belongs to the bacterial histone-like protein family. Heterodimer of an alpha and a beta chain.

In terms of biological role, this protein is one of the two subunits of integration host factor, a specific DNA-binding protein that functions in genetic recombination as well as in transcriptional and translational control. The polypeptide is Integration host factor subunit beta (Caulobacter vibrioides (strain ATCC 19089 / CIP 103742 / CB 15) (Caulobacter crescentus)).